Here is a 275-residue protein sequence, read N- to C-terminus: Nitrogenase iron protein 1 (275 aa).

9 to 16 contacts ATP; it reads GKGGIGKS. Cys97 contributes to the [4Fe-4S] cluster binding site. An ADP-ribosylarginine; by dinitrogenase reductase ADP-ribosyltransferase modification is found at Arg100. Cys132 contributes to the [4Fe-4S] cluster binding site.

The protein belongs to the NifH/BchL/ChlL family. As to quaternary structure, homodimer. Requires [4Fe-4S] cluster as cofactor. In terms of processing, the reversible ADP-ribosylation of Arg-100 inactivates the nitrogenase reductase and regulates nitrogenase activity.

The enzyme catalyses N2 + 8 reduced [2Fe-2S]-[ferredoxin] + 16 ATP + 16 H2O = H2 + 8 oxidized [2Fe-2S]-[ferredoxin] + 2 NH4(+) + 16 ADP + 16 phosphate + 6 H(+). Its function is as follows. The key enzymatic reactions in nitrogen fixation are catalyzed by the nitrogenase complex, which has 2 components: the iron protein and the molybdenum-iron protein. The sequence is that of Nitrogenase iron protein 1 (nifH1) from Methanosarcina barkeri.